The chain runs to 97 residues: Putative septation protein SpoVG (97 aa).

The protein belongs to the SpoVG family.

Its function is as follows. Could be involved in septation. The chain is Putative septation protein SpoVG from Anaeromyxobacter sp. (strain Fw109-5).